We begin with the raw amino-acid sequence, 157 residues long: Small ribosomal subunit protein uS7 (157 aa).

The protein belongs to the universal ribosomal protein uS7 family. In terms of assembly, part of the 30S ribosomal subunit. Contacts proteins S9 and S11.

One of the primary rRNA binding proteins, it binds directly to 16S rRNA where it nucleates assembly of the head domain of the 30S subunit. Is located at the subunit interface close to the decoding center, probably blocks exit of the E-site tRNA. The chain is Small ribosomal subunit protein uS7 from Hydrogenovibrio crunogenus (strain DSM 25203 / XCL-2) (Thiomicrospira crunogena).